Reading from the N-terminus, the 1135-residue chain is Envelopment polyprotein (1135 aa).

An N-terminal signal peptide occupies residues 1 to 18 (MGIWKWLVMASLVWPVLT). Topologically, residues 19-485 (LRNVYDMKIE…VPGFHGWATA (467 aa)) are lumenal. Disulfide bonds link cysteine 29–cysteine 151, cysteine 63–cysteine 157, cysteine 109–cysteine 128, cysteine 133–cysteine 138, cysteine 175–cysteine 185, cysteine 210–cysteine 247, cysteine 234–cysteine 351, cysteine 376–cysteine 435, cysteine 380–cysteine 389, cysteine 405–cysteine 424, and cysteine 452–cysteine 475. Residue asparagine 134 is glycosylated (N-linked (GlcNAc...) asparagine; by host). Residues asparagine 235 and asparagine 347 are each glycosylated (N-linked (GlcNAc...) asparagine; by host). N-linked (GlcNAc...) asparagine; by host glycosylation is present at asparagine 399. Residues 486 to 506 (ALLVTFCFGWVLIPAITFIIL) form a helical membrane-spanning segment. The Cytoplasmic portion of the chain corresponds to 507 to 627 (TILKFIANIF…LNLFRYKSRC (121 aa)). The tract at residues 516 to 533 (FHTSNQENRLKSVLRKIK) is binding to the ribonucleoprotein. CCHC-type zinc fingers lie at residues 545–565 (CDVC…GVSC) and 570–591 (CPYC…YKVC). Binding to the ribonucleoprotein regions lie at residues 588–605 (YKVC…KKTV), 592–603 (QVTHRFRDDLKK), and 611–625 (TPGC…RYKS). The ITAM domain occupies 611–634 (TPGCYRTLNLFRYKSRCYIFTMWI). The YxxL signature appears at 615–618 (YRTL). Residues 628–648 (YIFTMWIFLLVLESILWAASA) form a helical membrane-spanning segment. Over 649–1105 (SETPLTPVWN…EWISGIFSGN (457 aa)) the chain is Lumenal. 8 cysteine pairs are disulfide-bonded: cysteine 735–cysteine 770, cysteine 739–cysteine 777, cysteine 751–cysteine 885, cysteine 765–cysteine 896, cysteine 780–cysteine 904, cysteine 806–cysteine 815, cysteine 823–cysteine 832, and cysteine 863–cysteine 867. The interval 757–777 (YQYETSWGCNPSDCPGVGTGC) is fusion loop. Asparagine 928 is a glycosylation site (N-linked (GlcNAc...) asparagine; by host). Disulfide bonds link cysteine 970-cysteine 1000, cysteine 993-cysteine 1045, cysteine 1010-cysteine 1015, cysteine 1046-cysteine 1051, and cysteine 1085-cysteine 1089. The chain crosses the membrane as a helical span at residues 1106–1126 (WIVLIVLCVFLLFSLVLLSIL). The tract at residues 1122-1135 (LLSILCPVRKHKKS) is binding to the ribonucleoprotein. Over 1127–1135 (CPVRKHKKS) the chain is Cytoplasmic.

Belongs to the hantavirus envelope glycoprotein family. Homodimer. Homotetramer; forms heterotetrameric Gn-Gc spikes in the pre-fusion conformation. Interacts (via C-terminus) with the nucleoprotein. Interacts with host TUFM; this interaction contributes to the virus-induced degradation of mitochondria by autophagy, which leads to degradation of host MAVS and inhibition of type I interferon (IFN) responses. Interacts with host MAP1LC3B; this interaction contributes to the virus-induced degradation of mitochondria by autophagy, which leads to degradation of host MAVS and inhibition of type I interferon (IFN) responses. In terms of assembly, homodimer. Homotetramer; forms heterotetrameric Gn-Gc spikes in the pre-fusion conformation. Homotrimer; forms homotrimer in the post-fusion conformation at acidic pH. Interacts (via C-terminus) with the nucleoprotein. In terms of processing, envelope polyprotein precursor is quickly cleaved in vivo just after synthesis, presumably by host signal peptidase.

It is found in the virion membrane. It localises to the host cell surface. Its subcellular location is the host Golgi apparatus membrane. The protein localises to the host endoplasmic reticulum membrane. The protein resides in the host mitochondrion. Functionally, forms homotetramers with glycoprotein C at the surface of the virion. Attaches the virion to host cell receptors including integrin ITGAV/ITGB3. This attachment induces virion internalization predominantly through clathrin-dependent endocytosis. May also bind to host C1QBP for virus entry into the host cell. Mediates the assembly and budding of infectious virus particles through its interaction with the nucleocapsid protein and the viral genome. May dysregulate normal immune and endothelial cell responses through an ITAM motif. Translocates to mitochondria, binds to host TUFM and recruits MAP1LC3B. These interactions induce mitochondrial autophagy and therefore destruction of host MAVS leading to inhibition of type I interferon (IFN) responses. Concomitant breakdown of glycoprotein N is apparently prevented by the nucleoprotein that may inhibit Gn-stimulated autophagosome-lysosome fusion. Interacts with the viral genomic RNA. Forms homotetramers with glycoprotein N at the surface of the virion. Attaches the virion to host cell receptors including integrin ITGAV/ITGB3. This attachment induces virion internalization predominantly through clathrin-dependent endocytosis. May also bind to host C1QBP for virus entry into the host cell. Class II fusion protein that promotes fusion of viral membrane with host endosomal membrane after endocytosis of the virion. The protein is Envelopment polyprotein (GP) of Hantaan virus (strain Lee) (Lee virus).